A 424-amino-acid chain; its full sequence is UDP-N-acetylglucosamine 1-carboxyvinyltransferase (424 aa).

22–23 contacts phosphoenolpyruvate; it reads KN. R98 contributes to the UDP-N-acetyl-alpha-D-glucosamine binding site. The active-site Proton donor is the C122. Position 122 is a 2-(S-cysteinyl)pyruvic acid O-phosphothioketal (C122). Residues 127–131, D312, and I334 contribute to the UDP-N-acetyl-alpha-D-glucosamine site; that span reads RPVDQ.

This sequence belongs to the EPSP synthase family. MurA subfamily.

Its subcellular location is the cytoplasm. It carries out the reaction phosphoenolpyruvate + UDP-N-acetyl-alpha-D-glucosamine = UDP-N-acetyl-3-O-(1-carboxyvinyl)-alpha-D-glucosamine + phosphate. Its pathway is cell wall biogenesis; peptidoglycan biosynthesis. In terms of biological role, cell wall formation. Adds enolpyruvyl to UDP-N-acetylglucosamine. This Xanthomonas euvesicatoria pv. vesicatoria (strain 85-10) (Xanthomonas campestris pv. vesicatoria) protein is UDP-N-acetylglucosamine 1-carboxyvinyltransferase.